The chain runs to 289 residues: O-methyltransferase asqN (289 aa).

Aspartate 155 is an S-adenosyl-L-methionine binding site. Histidine 195 (proton acceptor) is an active-site residue.

The protein belongs to the class I-like SAM-binding methyltransferase superfamily. Cation-independent O-methyltransferase family.

It functions in the pathway secondary metabolite biosynthesis. The protein operates within alkaloid biosynthesis. It participates in mycotoxin biosynthesis. O-methyltransferase; part of the gene cluster that mediates the biosynthesis of the aspoquinolone mycotoxins. The role of asqN within the aspoquinolone pathway has still to be determined. The first step of the pathway is catalyzed by the nonribosomal peptide synthetase asqK that condenses anthranilic acid and O-methyl-L-tyrosine to produce 4'-methoxycyclopeptin. 4'-methoxycyclopeptin is then converted to 4'-methoxydehydrocyclopeptin by the ketoglutarate-dependent dioxygenase asqJ. AsqJ also converts its first product 4'-methoxydehydrocyclopeptin to 4'-methoxycyclopenin. The following conversion of 4'-methoxycyclopenin into 4'-methoxyviridicatin is catalyzed by the cyclopenase asqI. 4'-methoxyviridicatin is the precursor of quinolone natural products, and is further converted to quinolinone B. The prenyltransferase asqH1 then catalyzes the canonical Friedel-Crafts alkylation of quinolinone B with dimethylallyl cation to yield dimethylallyl quinolone, which is subjected to FAD-dependent dehydrogenation by the FAD-linked oxidoreductase asqF to yield conjugated aryl diene. The delta(3') double bond then serves as the site of the second alkylation with DMAPP catalyzed by the prenyltransferase asqH2 to yield a carbenium ion intermediate, which can be attacked by H(2)O to yield a styrenyl quinolone containing a C3'-hydroxyprenyl chain. The FAD-dependent monooxygenase asqG performs epoxidation of the terminal C7'-C8' olefin. Finally, after dehydratation of the epoxide at C3 by asqC, the quinolone epoxide rearrangement protein asqO catalyzes an enzymatic 3-exo-tet cyclization to yield the cyclopropyl-THF ring system in aspoquinolone. The polypeptide is O-methyltransferase asqN (Emericella nidulans (strain FGSC A4 / ATCC 38163 / CBS 112.46 / NRRL 194 / M139) (Aspergillus nidulans)).